The following is a 299-amino-acid chain: Taste receptor type 2 member 1 (299 aa).

Over 1–9 (MLESHLIIY) the chain is Extracellular. A helical membrane pass occupies residues 10–30 (FLLAVIQFLLGTFTNGIIVVV). At 31-55 (NGIDLIKHRKMAPLDLLLSCLAVSR) the chain is on the cytoplasmic side. A helical transmembrane segment spans residues 56 to 76 (IFLQLFIFYINVVVIFLIEFI). Residues 77 to 81 (TCSAS) are Extracellular-facing. The chain crosses the membrane as a helical span at residues 82-102 (CAFLVFVNELELWLATWLGVF). Residues 103–124 (YCAKVASVLHPLFIWLKMRISK) are Cytoplasmic-facing. Residues 125 to 145 (SVPWMILGSLLYVSMICIFHI) traverse the membrane as a helical segment. Residues 146–178 (KYTGFMVPYFLRNLFFQNATIQTEVKQAIQIFS) lie on the Extracellular side of the membrane. Asn163 carries an N-linked (GlcNAc...) asparagine glycan. Residues 179-199 (FVAELLVPLLIFLVAVLLLIF) traverse the membrane as a helical segment. Topologically, residues 200–222 (SLGRHTRQMRNTVAGSRVPGRGA) are cytoplasmic. A helical membrane pass occupies residues 223–243 (HISALLSILSFLILYISHYLI). Over 244–257 (KTFLSSLKFHVKRF) the chain is Extracellular. The chain crosses the membrane as a helical span at residues 258-278 (VFLFCILVIGTYPSGHSLILI). Residues 279–299 (LGNPKLKQNTKKFLCHSKCCQ) are Cytoplasmic-facing.

This sequence belongs to the G-protein coupled receptor T2R family.

The protein localises to the membrane. In terms of biological role, receptor that may play a role in the perception of bitterness and is gustducin-linked. May play a role in sensing the chemical composition of the gastrointestinal content. The activity of this receptor may stimulate alpha gustducin, mediate PLC-beta-2 activation and lead to the gating of TRPM5. The sequence is that of Taste receptor type 2 member 1 (TAS2R1) from Chlorocebus aethiops (Green monkey).